We begin with the raw amino-acid sequence, 352 residues long: DNA polymerase IV (352 aa).

Positions 6 to 186 constitute a UmuC domain; that stretch reads IIHIDMDAFY…LPLGKIPGVG (181 aa). 2 residues coordinate Mg(2+): Asp10 and Asp104. Glu105 is a catalytic residue.

The protein belongs to the DNA polymerase type-Y family. In terms of assembly, monomer. It depends on Mg(2+) as a cofactor.

The protein resides in the cytoplasm. The catalysed reaction is DNA(n) + a 2'-deoxyribonucleoside 5'-triphosphate = DNA(n+1) + diphosphate. Poorly processive, error-prone DNA polymerase involved in untargeted mutagenesis. Copies undamaged DNA at stalled replication forks, which arise in vivo from mismatched or misaligned primer ends. These misaligned primers can be extended by PolIV. Exhibits no 3'-5' exonuclease (proofreading) activity. May be involved in translesional synthesis, in conjunction with the beta clamp from PolIII. The protein is DNA polymerase IV of Neisseria meningitidis serogroup A / serotype 4A (strain DSM 15465 / Z2491).